The primary structure comprises 338 residues: tRNA N6-adenosine threonylcarbamoyltransferase (338 aa).

His-111 and His-115 together coordinate Fe cation. Substrate contacts are provided by residues 134–138 (LVSGG), Asp-167, Gly-180, and Asn-272. Asp-300 is a Fe cation binding site.

The protein belongs to the KAE1 / TsaD family. It depends on Fe(2+) as a cofactor.

It is found in the cytoplasm. The catalysed reaction is L-threonylcarbamoyladenylate + adenosine(37) in tRNA = N(6)-L-threonylcarbamoyladenosine(37) in tRNA + AMP + H(+). In terms of biological role, required for the formation of a threonylcarbamoyl group on adenosine at position 37 (t(6)A37) in tRNAs that read codons beginning with adenine. Is involved in the transfer of the threonylcarbamoyl moiety of threonylcarbamoyl-AMP (TC-AMP) to the N6 group of A37, together with TsaE and TsaB. TsaD likely plays a direct catalytic role in this reaction. This chain is tRNA N6-adenosine threonylcarbamoyltransferase, found in Shewanella denitrificans (strain OS217 / ATCC BAA-1090 / DSM 15013).